The chain runs to 262 residues: MEIIPPRLKEPLYRLYELRLRQGLAASKSDLPRHIAVLCDGNRRWARSAGYDDVSYGYRMGAAKIAEMLRWCHEAGIELATVYLLSTENLQRDPDELAALIEIITDVVEEICAPANHWSVRTVGDLGLIGEEPARRLRGAVESTPEVASFHVNVAVGYGGRREIVDAVRALLSKELANGATAEELVDAVTVEGISENLYTSGQPDPDLVIRTSGEQRLSGFLLWQSAYSEMWFTEAHWPAFRHVDFLRALRDYSARHRRYGR.

D40 is a catalytic residue. Residue D40 coordinates Mg(2+). Substrate-binding positions include 41–44 (GNRR), W45, and 86–88 (STE). N89 (proton acceptor) is an active-site residue. Substrate is bound by residues R92, R211, and 217 to 219 (RLS). Mg(2+) is bound at residue E230.

Belongs to the UPP synthase family. Z-FPP synthase subfamily. Mg(2+) is required as a cofactor.

It carries out the reaction isopentenyl diphosphate + (2E)-geranyl diphosphate = (2Z,6E)-farnesyl diphosphate + diphosphate. The protein operates within phospholipid metabolism; decaprenyl phosphate biosynthesis. Its function is as follows. Generates Z-farnesyl diphosphate (Z-FPP) from isopentenyl pyrophosphate (IPP). Z-FPP is the precursor of decaprenyl diphosphate, which has a central role in the biosynthesis of the mycobacterial cell wall. This chain is Short-chain Z-isoprenyl diphosphate synthase, found in Mycobacterium bovis (strain ATCC BAA-935 / AF2122/97).